Here is a 179-residue protein sequence, read N- to C-terminus: Coatomer subunit zeta-2 (179 aa).

This sequence belongs to the adaptor complexes small subunit family. As to quaternary structure, oligomeric complex that consists of at least the alpha, beta, beta', gamma, delta, epsilon and zeta subunits.

It localises to the cytoplasm. It is found in the golgi apparatus membrane. The protein localises to the cytoplasmic vesicle. Its subcellular location is the COPI-coated vesicle membrane. The coatomer is a cytosolic protein complex that binds to dilysine motifs and reversibly associates with Golgi non-clathrin-coated vesicles, which further mediate biosynthetic protein transport from the ER, via the Golgi up to the trans Golgi network. Coatomer complex is required for budding from Golgi membranes, and is essential for the retrograde Golgi-to-ER transport of dilysine-tagged proteins. The zeta subunit may be involved in regulating the coat assembly and, hence, the rate of biosynthetic protein transport due to its association-dissociation properties with the coatomer complex. The sequence is that of Coatomer subunit zeta-2 from Arabidopsis thaliana (Mouse-ear cress).